A 105-amino-acid chain; its full sequence is Large ribosomal subunit protein uL24 (105 aa).

It belongs to the universal ribosomal protein uL24 family. Part of the 50S ribosomal subunit.

Its function is as follows. One of two assembly initiator proteins, it binds directly to the 5'-end of the 23S rRNA, where it nucleates assembly of the 50S subunit. In terms of biological role, one of the proteins that surrounds the polypeptide exit tunnel on the outside of the subunit. The protein is Large ribosomal subunit protein uL24 of Xylella fastidiosa (strain 9a5c).